Reading from the N-terminus, the 350-residue chain is Small ribosomal subunit biogenesis GTPase RsgA (350 aa).

Positions 1 to 17 (MSKNKLSKGQQRRVNAN) are enriched in polar residues. The disordered stretch occupies residues 1 to 24 (MSKNKLSKGQQRRVNANHQRRLKT). The CP-type G domain maps to 104 to 273 (TSVLTRPDFY…VIDSPGVREF (170 aa)). GTP-binding positions include 160–163 (NKID) and 214–222 (GQSGVGKSS). The Zn(2+) site is built by cysteine 297, cysteine 302, histidine 304, and cysteine 310.

This sequence belongs to the TRAFAC class YlqF/YawG GTPase family. RsgA subfamily. Monomer. Associates with 30S ribosomal subunit, binds 16S rRNA. Zn(2+) serves as cofactor.

It localises to the cytoplasm. In terms of biological role, one of several proteins that assist in the late maturation steps of the functional core of the 30S ribosomal subunit. Helps release RbfA from mature subunits. May play a role in the assembly of ribosomal proteins into the subunit. Circularly permuted GTPase that catalyzes slow GTP hydrolysis, GTPase activity is stimulated by the 30S ribosomal subunit. This is Small ribosomal subunit biogenesis GTPase RsgA from Salmonella schwarzengrund (strain CVM19633).